Reading from the N-terminus, the 2104-residue chain is 5'-3' DNA helicase ZGRF1 (2104 aa).

Positions Ser335–Gly345 are enriched in polar residues. Residues Ser335–Val359 are disordered. A Phosphoserine modification is found at Ser336. Positions Asp347–Glu356 are enriched in basic and acidic residues. Ser793 and Ser864 each carry phosphoserine. Residues Cys1349, His1351, Cys1374, and Cys1382 each contribute to the Zn(2+) site. The GRF-type zinc finger occupies Cys1349 to Val1391. The tract at residues Val2085 to Ser2104 is disordered.

Interacts with DNA repair protein RAD51; the interaction promotes RAD51 strand exchange activity. Also interacts with DNA repair proteins EXO1 and BRCA1; the interactions are increased following DNA damage induction.

It localises to the nucleus. The enzyme catalyses ATP + H2O = ADP + phosphate + H(+). It catalyses the reaction Couples ATP hydrolysis with the unwinding of duplex DNA at the replication fork by translocating in the 5'-3' direction. This creates two antiparallel DNA single strands (ssDNA). The leading ssDNA polymer is the template for DNA polymerase III holoenzyme which synthesizes a continuous strand.. 5'-3' DNA helicase which is recruited to sites of DNA damage and promotes repair of replication-blocking DNA lesions through stimulation of homologous recombination (HR). Promotes HR by directly stimulating RAD51-mediated strand exchange activity. Not required to load RAD51 at sites of DNA damage but promotes recombinational repair after RAD51 recruitment. Also promotes HR by positively regulating EXO1-mediated DNA end resection of double-strand breaks. Required for recruitment of replication protein RPA2 to DNA damage sites. Promotes the initiation of the G2/M checkpoint but not its maintenance. Catalyzes Holliday junction branch migration and dissociation of D-loops and DNA flaps. The protein is 5'-3' DNA helicase ZGRF1 (ZGRF1) of Homo sapiens (Human).